The following is a 311-amino-acid chain: uncharacterized protein (311 aa).

The next 9 membrane-spanning stretches (helical) occupy residues 11–31, 34–54, 72–92, 101–121, 147–167, 198–218, 233–253, 257–277, and 279–299; these read LDNWLFVAPALLLAVLSGYLS, VGIVNIAINGGMVFGGMFLSL, LAISIPLSVIFASAVGFLFGI, HVIVGTGVNLLGTGINFFVAQ, IEGIAIFAFAIIFVLLVWYLM, WFGVMASTMVAALAGCCFALS, GFIAIAIMIISMWRIIPSIVI, FALAYVLTTGVVGNANNTYLL, and TIPFIISLLVMMVFGYLNVGP.

The protein localises to the cell membrane. This is an uncharacterized protein from Mycoplasma pneumoniae (strain ATCC 29342 / M129 / Subtype 1) (Mycoplasmoides pneumoniae).